A 131-amino-acid polypeptide reads, in one-letter code: EG45-like domain containing protein (131 aa).

An N-terminal signal peptide occupies residues 1–24 (MGVGTKVLVITTMAICLISSAAYA). An Expansin-like EG45; incomplete domain is found at 27-131 (GTATFYTPPY…GKIKIEFNQA (105 aa)). C73 and C85 are joined by a disulfide.

Expressed in the outer layer of xylem and the vascular cambial zone of roots, in shoot cambium, but not in leaves.

It is found in the secreted. Functionally, might have a systemic role in water and solute homeostasis. Has no expansin-like activity. The polypeptide is EG45-like domain containing protein (CjBAp12) (Citrus jambhiri (Rough lemon)).